The primary structure comprises 233 residues: uncharacterized protein (233 aa).

This is an uncharacterized protein from Acanthamoeba polyphaga (Amoeba).